Reading from the N-terminus, the 175-residue chain is Bcl-2-related protein A1 (175 aa).

A BH1 motif is present at residues 77 to 97 (KEFEDGIINWGRIVTIFAFEG). The BH2 motif lies at 132 to 147 (EWIRQNGGWENGFVKK).

It belongs to the Bcl-2 family. As to quaternary structure, interacts directly with BAK1, BID, BMF and BBC3. Interacts directly with BCL2L11/BIM. Interacts with BAX isoform Sigma. Interacts directly with PMAIP1. Interacts with RTL10/BOP. Interacts with ING4. Interacts with UBQLN4. In terms of tissue distribution, seems to be restricted to the hematopoietic compartment. Expressed in peripheral blood, spleen, and bone marrow, at moderate levels in lung, small intestine and testis, at a minimal levels in other tissues. Also found in vascular smooth muscle cells and hematopoietic malignancies.

It is found in the cytoplasm. Retards apoptosis induced by IL-3 deprivation. May function in the response of hemopoietic cells to external signals and in maintaining endothelial survival during infection. Can inhibit apoptosis induced by serum starvation in the mammary epithelial cell line HC11. The protein is Bcl-2-related protein A1 (BCL2A1) of Homo sapiens (Human).